The chain runs to 211 residues: Putative truncated flagellar export/assembly protein LafU (211 aa).

In terms of domain architecture, OmpA-like spans 58-176 (LRVLIKDDQN…RIEIMVLTKS (119 aa)).

Belongs to the MotB family.

The chain is Putative truncated flagellar export/assembly protein LafU from Escherichia coli (strain K12).